The chain runs to 257 residues: MPKRTGDILISTPVSKVRRKLNFDSPYTSRAAAPTVQGIKRRSWTYRPMYRKPRMYRMYRSPDVPFGCEGPCKVQSYEQRDDVKHTGVVRCVSDVTRGSGITHRVGKRFCIKSIYILGKIWMDENIKKQNHTNQVMFFLVRDRRPYGTSPMDFGQVFNMFDNEPSTATVKNDLRDRYQVMRKFHATVVGGPSGMKEQCLLKRFFKVNTHVVYNHQEQAKYENHTENALLLYMACTHASNPVYATLKIRIYFYDAVTN.

The short motif at 3–20 is the Bipartite nuclear localization signal element; the sequence is KRTGDILISTPVSKVRRK. The short motif at 40 to 54 is the Nuclear localization signal element; it reads KRRSWTYRPMYRKPR. A zinc finger spans residues 68 to 85; it reads CEGPCKVQSYEQRDDVKH. A Nuclear export signal motif is present at residues 101–122; it reads ITHRVGKRFCIKSIYILGKIWM. The short motif at 201 to 248 is the Bipartite nuclear localization signal element; sequence KRFFKVNTHVVYNHQEQAKYENHTENALLLYMACTHASNPVYATLKIR.

Belongs to the geminiviridae capsid protein family. Homomultimer. Binds to single-stranded and double-stranded viral DNA. Interacts (via nuclear localization signals) with host importin alpha-1a.

The protein localises to the virion. It localises to the host nucleus. Encapsidates the viral genome into characteristic twinned ('geminate') particles. Binds the genomic viral ssDNA and shuttles it into and out of the cell nucleus. Plays a role in protection of the genome from degradation, virus acquisition and transmission by insect vectors, infectivity, and systemic movement. The CP of monopartite geminiviruses is absolutely essential for virus movement. The sequence is that of Capsid protein from Tomato yellow leaf curl Sardinia virus (isolate Spain-1) (TYLCSV).